The chain runs to 192 residues: Pyridoxal 5'-phosphate synthase subunit PdxT (192 aa).

L-glutamine is bound at residue 47-49 (GES). The active-site Nucleophile is cysteine 79. Residues arginine 106 and 134–135 (IR) contribute to the L-glutamine site. Catalysis depends on charge relay system residues histidine 170 and glutamate 172.

The protein belongs to the glutaminase PdxT/SNO family. In the presence of PdxS, forms a dodecamer of heterodimers. Only shows activity in the heterodimer.

The enzyme catalyses aldehydo-D-ribose 5-phosphate + D-glyceraldehyde 3-phosphate + L-glutamine = pyridoxal 5'-phosphate + L-glutamate + phosphate + 3 H2O + H(+). The catalysed reaction is L-glutamine + H2O = L-glutamate + NH4(+). It participates in cofactor biosynthesis; pyridoxal 5'-phosphate biosynthesis. Its function is as follows. Catalyzes the hydrolysis of glutamine to glutamate and ammonia as part of the biosynthesis of pyridoxal 5'-phosphate. The resulting ammonia molecule is channeled to the active site of PdxS. This is Pyridoxal 5'-phosphate synthase subunit PdxT from Anoxybacillus flavithermus (strain DSM 21510 / WK1).